The sequence spans 33 residues: Brevinin-2Eb (33 aa).

A disulfide bridge links cysteine 27 with cysteine 33.

The protein belongs to the frog skin active peptide (FSAP) family. Brevinin subfamily. As to expression, expressed by the skin glands.

The protein localises to the secreted. Functionally, shows antibacterial activity against representative Gram-negative and Gram-positive bacterial species, and hemolytic activity. This chain is Brevinin-2Eb, found in Pelophylax lessonae (Pool frog).